A 236-amino-acid chain; its full sequence is 1-(5-phosphoribosyl)-5-[(5-phosphoribosylamino)methylideneamino] imidazole-4-carboxamide isomerase (236 aa).

Residue aspartate 8 is the Proton acceptor of the active site. The active-site Proton donor is the aspartate 129.

Belongs to the HisA/HisF family.

Its subcellular location is the cytoplasm. It carries out the reaction 1-(5-phospho-beta-D-ribosyl)-5-[(5-phospho-beta-D-ribosylamino)methylideneamino]imidazole-4-carboxamide = 5-[(5-phospho-1-deoxy-D-ribulos-1-ylimino)methylamino]-1-(5-phospho-beta-D-ribosyl)imidazole-4-carboxamide. It participates in amino-acid biosynthesis; L-histidine biosynthesis; L-histidine from 5-phospho-alpha-D-ribose 1-diphosphate: step 4/9. The protein is 1-(5-phosphoribosyl)-5-[(5-phosphoribosylamino)methylideneamino] imidazole-4-carboxamide isomerase of Methanoregula boonei (strain DSM 21154 / JCM 14090 / 6A8).